We begin with the raw amino-acid sequence, 96 residues long: Transcription and mRNA export factor SUS1 (96 aa).

Belongs to the ENY2 family. In terms of assembly, component of the nuclear pore complex (NPC)-associated TREX-2 complex (transcription and export complex 2), composed of at least SUS1, SAC3, THP1, SEM1, and CDC31. TREX-2 contains 2 SUS1 chains. The TREX-2 complex interacts with the nucleoporin NUP1. Component of the 1.8 MDa SAGA transcription coactivator-HAT complex. SAGA is built of 5 distinct domains with specialized functions. Within the SAGA complex, SUS1, SGF11, SGF73 and UBP8 form an additional subcomplex of SAGA called the DUB module (deubiquitination module). Interacts directly with THP1, SAC3, SGF11, and with the RNA polymerase II.

The protein resides in the nucleus. The protein localises to the nucleoplasm. Its subcellular location is the cytoplasm. It is found in the P-body. Involved in mRNA export coupled transcription activation by association with both the TREX-2 and the SAGA complexes. At the promoters, SAGA is required for recruitment of the basal transcription machinery. It influences RNA polymerase II transcriptional activity through different activities such as TBP interaction and promoter selectivity, interaction with transcription activators, and chromatin modification through histone acetylation and deubiquitination. Within the SAGA complex, participates in a subcomplex required for deubiquitination of H2B and for the maintenance of steady-state H3 methylation levels. The TREX-2 complex functions in docking export-competent ribonucleoprotein particles (mRNPs) to the nuclear entrance of the nuclear pore complex (nuclear basket). TREX-2 participates in mRNA export and accurate chromatin positioning in the nucleus by tethering genes to the nuclear periphery. May also be involved in cytoplasmic mRNA decay by interaction with components of P-bodies. The polypeptide is Transcription and mRNA export factor SUS1 (Kluyveromyces lactis (strain ATCC 8585 / CBS 2359 / DSM 70799 / NBRC 1267 / NRRL Y-1140 / WM37) (Yeast)).